The sequence spans 159 residues: MSSSKEQEAQKGKQGWITPAVIPPEEWATFRYRGKTLEELLNMPMDEFIKLLPARQRRSLKRGLKPEHRKLLEKIRKAKRLAAQGKKVVIKTHCRDMIILPEMVGLTIQVYNGITYIPVYISPWHIGHYLGEFALTTKIVQHGEPGLKATRSSLHIAAK.

This sequence belongs to the universal ribosomal protein uS19 family.

Functionally, protein S19 forms a complex with S13 that binds strongly to the 16S ribosomal RNA. In Pyrobaculum arsenaticum (strain DSM 13514 / JCM 11321 / PZ6), this protein is Small ribosomal subunit protein uS19.